The sequence spans 1407 residues: Enhancer of mRNA-decapping protein 4 (1407 aa).

Position 2 is an N-acetylalanine (A2). A phosphoserine mark is found at S3 and S6. K125 is subject to N6-acetyllysine. WD repeat units lie at residues 174–214 (GFTG…GKIQ), 230–277 (NHFR…SSHS), 295–334 (GHST…QDEP), and 342–393 (PHDG…CLQT). Residues 547-566 (GESRPELGSEGLASAPHGSQ) form a disordered region. Phosphoserine is present on residues S560, S565, S583, and S585. 2 disordered regions span residues 604 to 632 (SLQQ…SSSS) and 673 to 745 (SSSS…STAL). 2 stretches are compositionally biased toward low complexity: residues 609 to 632 (SASP…SSSS) and 673 to 693 (SSSS…LPGP). 4 positions are modified to phosphoserine: S681, S713, S728, and S730. Positions 727–745 (ASPSRTRSPDVISSASTAL) are enriched in polar residues. T732 is modified (phosphothreonine). S734 and S746 each carry phosphoserine. The disordered stretch occupies residues 787–817 (PRPRQGPELSSQLGLDGGPGDGDRHSTPSLL). Phosphothreonine is present on T827. 2 positions are modified to phosphoserine: S850 and S877. Residues 875–951 (HDSQDTSAEQ…SRLTEHQVVE (77 aa)) form a disordered region. T880 is subject to Phosphothreonine. A phosphoserine mark is found at S881, S885, S893, S896, and S898. Residue T907 is modified to Phosphothreonine. Residues 972–1031 (HNQEELLQRLCAQLEGLQSTVTDHVERALETRHEQEQRRLERALAEGQQRGGQLQEQLTQ) adopt a coiled-coil conformation. S1386 carries the phosphoserine modification.

The protein belongs to the WD repeat EDC4 family. As to quaternary structure, part of a decapping complex consisting of DCP1A, DCP2, EDC3, EDC4 and probably DDX6. Part of a complex consisting of DCP1A, EDC3, EDC4 and DDX6. Part of a complex consisting of DCP1B, EDC3, EDC4 and DDX6. Interacts with DCP2. Interacts with NBDY. Interacts with Tex19.1. Interacts with LSM14A. Interacts with DDX6.

The protein resides in the cytoplasm. It localises to the P-body. Its subcellular location is the nucleus. Its function is as follows. In the process of mRNA degradation, seems to play a role in mRNA decapping. Component of a complex containing DCP2 and DCP1A which functions in decapping of ARE-containing mRNAs. Promotes complex formation between DCP1A and DCP2. Enhances the catalytic activity of DCP2 (in vitro). This Rattus norvegicus (Rat) protein is Enhancer of mRNA-decapping protein 4 (Edc4).